We begin with the raw amino-acid sequence, 115 residues long: Large ribosomal subunit protein bL20c (115 aa).

The protein belongs to the bacterial ribosomal protein bL20 family.

The protein resides in the plastid. It localises to the chloroplast. In terms of biological role, binds directly to 23S ribosomal RNA and is necessary for the in vitro assembly process of the 50S ribosomal subunit. It is not involved in the protein synthesizing functions of that subunit. This Cycas taitungensis (Prince sago) protein is Large ribosomal subunit protein bL20c.